Consider the following 285-residue polypeptide: Dihydropteroate synthase (285 aa).

Residues Thr-25–Lys-271 enclose the Pterin-binding domain. Asn-32 is a Mg(2+) binding site. (7,8-dihydropterin-6-yl)methyl diphosphate contacts are provided by residues Thr-72, Asp-106, Asn-125, Asp-189, Lys-225, and Arg-259–His-261.

This sequence belongs to the DHPS family. It depends on Mg(2+) as a cofactor.

The catalysed reaction is (7,8-dihydropterin-6-yl)methyl diphosphate + 4-aminobenzoate = 7,8-dihydropteroate + diphosphate. It participates in cofactor biosynthesis; tetrahydrofolate biosynthesis; 7,8-dihydrofolate from 2-amino-4-hydroxy-6-hydroxymethyl-7,8-dihydropteridine diphosphate and 4-aminobenzoate: step 1/2. Catalyzes the condensation of para-aminobenzoate (pABA) with 6-hydroxymethyl-7,8-dihydropterin diphosphate (DHPt-PP) to form 7,8-dihydropteroate (H2Pte), the immediate precursor of folate derivatives. This chain is Dihydropteroate synthase (sul), found in Bacillus subtilis (strain 168).